An 860-amino-acid polypeptide reads, in one-letter code: Probable inorganic carbon transporter subunit DabA (860 aa).

Residues 1–32 form a disordered region; that stretch reads MTTTSLGADAAHTHAMVPSAIPPEGSDAAGPD. Zn(2+)-binding residues include cysteine 369, aspartate 371, histidine 551, and cysteine 566.

Belongs to the inorganic carbon transporter (TC 9.A.2) DabA family. As to quaternary structure, forms a complex with DabB. Zn(2+) is required as a cofactor.

The protein localises to the cell inner membrane. Its function is as follows. Part of an energy-coupled inorganic carbon pump. The chain is Probable inorganic carbon transporter subunit DabA from Ralstonia pickettii (strain 12D).